Here is a 230-residue protein sequence, read N- to C-terminus: MAKKRGKKYQDALKKVDSKKEYAVDDAVDLVKEIDFANFDATVEVAFNLNVDTKQADQQLRGAIVLPNGTGKDQTVIVFAKGENAKAAQEAGADFVGDQDLVEKIQDGWLDFDVAIATPDMMPQVGRLGRVLGPKGLMPNPKTGTVTMDVAKAVSDAKAGQVTYRTDRDGNVAVPFGKVSFDTAKLVENLKTIEDVVVKARPAAVRGTYIKHASIASTFGPSVTLDLTTF.

It belongs to the universal ribosomal protein uL1 family. Part of the 50S ribosomal subunit.

Binds directly to 23S rRNA. The L1 stalk is quite mobile in the ribosome, and is involved in E site tRNA release. In terms of biological role, protein L1 is also a translational repressor protein, it controls the translation of the L11 operon by binding to its mRNA. This is Large ribosomal subunit protein uL1 from Limosilactobacillus fermentum (strain NBRC 3956 / LMG 18251) (Lactobacillus fermentum).